A 549-amino-acid polypeptide reads, in one-letter code: Cation/acetate symporter ActP (549 aa).

The next 13 membrane-spanning stretches (helical) occupy residues 33–53 (WQAIIMFLIFVVFTLGITYWA), 77–97 (LAIAGDYMSAASFLGISALVF), 103–123 (GLIYSLGFLVGWPIILFLIAE), 148–168 (ILSACGSLVVVALYLIAQMVG), 183–203 (IAVVLVGVLMMMYVLFGGMLA), 206–226 (WVQIIKAVLLLFGASFMAFMV), 262–282 (ISALSLGLGLMFGTAGLPHIL), 303–323 (GFMGYFYILTFIIGFGAIMLV), 355–375 (LFLGFISAVAFATILAVVAGL), 404–424 (VSKITVLILGVIAIILGMLFE), 428–448 (IAFMVGLAFAIAASCNFPIIL), 464–484 (GGWLGLITAVVLMILGPTIWV), and 493–513 (IFPYEYPALFSISVAFLGIWF).

The protein belongs to the sodium:solute symporter (SSF) (TC 2.A.21) family.

Its subcellular location is the cell inner membrane. Its function is as follows. Transports acetate. This Shigella boydii serotype 4 (strain Sb227) protein is Cation/acetate symporter ActP.